Consider the following 140-residue polypeptide: ATP synthase epsilon chain 1 (140 aa).

The protein belongs to the ATPase epsilon chain family. As to quaternary structure, F-type ATPases have 2 components, CF(1) - the catalytic core - and CF(0) - the membrane proton channel. CF(1) has five subunits: alpha(3), beta(3), gamma(1), delta(1), epsilon(1). CF(0) has three main subunits: a, b and c.

The protein localises to the cell inner membrane. In terms of biological role, produces ATP from ADP in the presence of a proton gradient across the membrane. This chain is ATP synthase epsilon chain 1, found in Methylococcus capsulatus (strain ATCC 33009 / NCIMB 11132 / Bath).